A 239-amino-acid polypeptide reads, in one-letter code: Aspartate/glutamate leucyltransferase (239 aa).

Belongs to the R-transferase family. Bpt subfamily.

The protein resides in the cytoplasm. It catalyses the reaction N-terminal L-glutamyl-[protein] + L-leucyl-tRNA(Leu) = N-terminal L-leucyl-L-glutamyl-[protein] + tRNA(Leu) + H(+). It carries out the reaction N-terminal L-aspartyl-[protein] + L-leucyl-tRNA(Leu) = N-terminal L-leucyl-L-aspartyl-[protein] + tRNA(Leu) + H(+). Its function is as follows. Functions in the N-end rule pathway of protein degradation where it conjugates Leu from its aminoacyl-tRNA to the N-termini of proteins containing an N-terminal aspartate or glutamate. The chain is Aspartate/glutamate leucyltransferase from Campylobacter jejuni subsp. jejuni serotype O:6 (strain 81116 / NCTC 11828).